A 225-amino-acid chain; its full sequence is Probable glutathione S-transferase (225 aa).

In terms of domain architecture, GST N-terminal spans 6–85 (EDVKLLGIVG…YIDETWKNNP (80 aa)). Glutathione is bound by residues serine 16, lysine 43, valine 57, and 69–70 (ES). The GST C-terminal domain occupies 90-214 (DPYQRALARF…PPRDPLFAYF (125 aa)).

The protein belongs to the GST superfamily. HSP26 family.

It carries out the reaction RX + glutathione = an S-substituted glutathione + a halide anion + H(+). May play a role in the cellular response to stress. The chain is Probable glutathione S-transferase (HSP26-A) from Glycine max (Soybean).